The primary structure comprises 420 residues: MSSETVSYFSHPFPRRQSVGVSVGGVIVGGSAPVVVQSMTNTDTADVDSTVAQVAALHRAGSEIVRITVDRDESAAAVPKIRERLERLGHDVPLVGDFHYIGHKLLADHPACAEALAKYRINPGNVGFKDKKDKQFADIVEMAIRYDKPVRIGVNWGSLDQELLTTLMDRNQAEGAPLSAQDVMREAIVQSALISANLAEEIGLGRDKIILSAKVSQVQDLIAVYTMLAQRSNHALHLGLTEAGMGTKGIVASSAAMGILLQQGIGDTIRISLTPEPGGDRTREVQVAQELLQTMGFRQFVPIVAACPGCGRTTSTVFQELAQTIQEDIRRNMPLWREKYPGVEALSVAVMGCIVNGPGESKHADIGISLPGTGETPSAPVFVDGKKVATLRGPGIAEDFQKMVADYIENRFGLGRKIAS.

[4Fe-4S] cluster-binding residues include C307, C310, C353, and E360.

It belongs to the IspG family. [4Fe-4S] cluster serves as cofactor.

The enzyme catalyses (2E)-4-hydroxy-3-methylbut-2-enyl diphosphate + oxidized [flavodoxin] + H2O + 2 H(+) = 2-C-methyl-D-erythritol 2,4-cyclic diphosphate + reduced [flavodoxin]. The protein operates within isoprenoid biosynthesis; isopentenyl diphosphate biosynthesis via DXP pathway; isopentenyl diphosphate from 1-deoxy-D-xylulose 5-phosphate: step 5/6. Functionally, converts 2C-methyl-D-erythritol 2,4-cyclodiphosphate (ME-2,4cPP) into 1-hydroxy-2-methyl-2-(E)-butenyl 4-diphosphate. This chain is 4-hydroxy-3-methylbut-2-en-1-yl diphosphate synthase (flavodoxin), found in Brucella suis biovar 1 (strain 1330).